The chain runs to 236 residues: 1-(5-phosphoribosyl)-5-[(5-phosphoribosylamino)methylideneamino] imidazole-4-carboxamide isomerase (236 aa).

Catalysis depends on D8, which acts as the Proton acceptor. The active-site Proton donor is the D127.

This sequence belongs to the HisA/HisF family.

Its subcellular location is the cytoplasm. The enzyme catalyses 1-(5-phospho-beta-D-ribosyl)-5-[(5-phospho-beta-D-ribosylamino)methylideneamino]imidazole-4-carboxamide = 5-[(5-phospho-1-deoxy-D-ribulos-1-ylimino)methylamino]-1-(5-phospho-beta-D-ribosyl)imidazole-4-carboxamide. It participates in amino-acid biosynthesis; L-histidine biosynthesis; L-histidine from 5-phospho-alpha-D-ribose 1-diphosphate: step 4/9. This Campylobacter fetus subsp. fetus (strain 82-40) protein is 1-(5-phosphoribosyl)-5-[(5-phosphoribosylamino)methylideneamino] imidazole-4-carboxamide isomerase.